The chain runs to 237 residues: B3 domain-containing protein Os06g0194400 (237 aa).

2 disordered regions span residues 1–23 (MIEAESQMAEAASYEEQRRRQVE) and 38–82 (SAAV…LPEK). The TF-B3 DNA-binding region spans 139-230 (FVKPMLQSHV…KFKVYIIRAS (92 aa)).

The protein localises to the nucleus. The polypeptide is B3 domain-containing protein Os06g0194400 (Oryza sativa subsp. japonica (Rice)).